A 213-amino-acid polypeptide reads, in one-letter code: mRNA-decapping protein OPG121 (213 aa).

2 residues coordinate N(7)-methyl-GTP: E16 and R50. The 180-residue stretch at K30–L209 folds into the Nudix hydrolase domain. The Nudix box signature appears at G111–D132. Residues E126 and E130 each contribute to the Mg(2+) site. Residue D151 coordinates N(7)-methyl-GTP. E183 contributes to the Mg(2+) binding site.

The protein belongs to the Nudix hydrolase family. As to quaternary structure, interacts with the late transcription elongation factor VLTF-4/OPG110. Interacts with the late transcription factors VLTF-1. It depends on Mg(2+) as a cofactor. The cofactor is Mn(2+).

It catalyses the reaction a 5'-end (N(7)-methyl 5'-triphosphoguanosine)-guanosine in mRNA + H2O = a 5'-end phospho-guanosine in mRNA + N(7)-methyl-GDP + 2 H(+). Acts with RNA polymerase to initiate transcription from late gene promoters. This Cynomys gunnisoni (Gunnison's prairie dog) protein is mRNA-decapping protein OPG121 (OPG121).